We begin with the raw amino-acid sequence, 72 residues long: UPF0270 protein ESA_04379 (72 aa).

The protein belongs to the UPF0270 family.

The polypeptide is UPF0270 protein ESA_04379 (Cronobacter sakazakii (strain ATCC BAA-894) (Enterobacter sakazakii)).